A 139-amino-acid chain; its full sequence is Protein archease (139 aa).

Ca(2+) is bound by residues aspartate 12, aspartate 138, and isoleucine 139.

Belongs to the archease family.

Functionally, activates the tRNA-splicing ligase complex by facilitating the enzymatic turnover of catalytic subunit RtcB. Acts by promoting the guanylylation of RtcB, a key intermediate step in tRNA ligation. Can also alter the NTP specificity of RtcB such that ATP, dGTP or ITP is used efficiently. This is Protein archease from Saccharolobus solfataricus (strain ATCC 35092 / DSM 1617 / JCM 11322 / P2) (Sulfolobus solfataricus).